The chain runs to 30 residues: Nattererin-1 (30 aa).

Expressed by the skin glands.

Its subcellular location is the secreted. Probably has antibacterial activity. This chain is Nattererin-1, found in Physalaemus nattereri (Cuyaba dwarf frog).